Reading from the N-terminus, the 524-residue chain is MSWNNIGVVEMTPILFQFLLSSLCVFLLFVFIRFLNDIWWTPIRLQRVFRQQGIRGPSYGFLYGNTKEILNMRKESMSRPMDYLSHNIFPRLQPHLYSWLNIYGKNFLNWYGPRAQFVVTQVDFVKETMIKDQAYPKMDPEWFAKKLLGDGIVTSKGKKWAKHRRLANHAFHAESLKSMTPAMIASVEMMLKRWKQHEGREIDVFQEFKILTSEVISRTAFGSSYLDGKDIFDRLTQLGIIITRNSYKVKLPGISLFYKSNDEIEAEKLDQGLYDSILRIMEKREKESTMSGEVGSFGTDFLGLLMKAMNDADEKNRITAQDVVDECKTFYVAGQETTTTLLAWVIFLLGIHTDWQEKARQEVLNLFGQEIPNSDGLAKLKTVNMIINETLRLYPPVIFLTRKVKEETKFGKLTLPANVHIVVPTLALHHDEQIWGDDALLFKPERFSQGVAKATNNNAAAFFPFGLGPRSCVGLNFATNEAKIALAMILQCYSFALSPTYIHSPVQILTVRPQHGLQVMLQPL.

A helical membrane pass occupies residues 12–32 (TPILFQFLLSSLCVFLLFVFI). Cys472 lines the heme pocket.

Belongs to the cytochrome P450 family. Requires heme as cofactor.

It localises to the membrane. Functionally, probable heme-thiolate monooxygenase. This chain is Cytochrome P450 CYP749A22, found in Panax ginseng (Korean ginseng).